Consider the following 692-residue polypeptide: Elongation factor G (692 aa).

The region spanning 8 to 283 is the tr-type G domain; it reads NRIRNIGIAA…AVIDYLPAPT (276 aa). Residues 17–24, 81–85, and 135–138 each bind GTP; these read AHIDAGKT, DTPGH, and NKMD.

The protein belongs to the TRAFAC class translation factor GTPase superfamily. Classic translation factor GTPase family. EF-G/EF-2 subfamily.

It is found in the cytoplasm. Functionally, catalyzes the GTP-dependent ribosomal translocation step during translation elongation. During this step, the ribosome changes from the pre-translocational (PRE) to the post-translocational (POST) state as the newly formed A-site-bound peptidyl-tRNA and P-site-bound deacylated tRNA move to the P and E sites, respectively. Catalyzes the coordinated movement of the two tRNA molecules, the mRNA and conformational changes in the ribosome. In Helicobacter pylori (strain G27), this protein is Elongation factor G.